A 496-amino-acid polypeptide reads, in one-letter code: MEYTTILVGFLIGFVLFKALTRKSKNLPPGPHVLPIIGNLHLVGSIPHKSILKLAEKYGPIMSLQFGQIPTIVVSSPSMAKEILQKQDVAFAGKRIPDALNAHNHWQFSVVWLPANSLWRTLRKILTSNIFTNNRLEASQHLRSQKVRDLVEYCKKSGDKGEAVEIGQAAYRTSLNLLSSTIFSKDLADYYSETGAPREFKDAIWNILVESVKPNLADFVPILSMFDLQGIKRRAGIHFGKGLKIMEGLVNERLEHRETHGATHNDILDIFLNYCDEHPDELDRHRVKHTILDLFIAGTDTTSSVTEWTMAELIQNPQVMKRAKDELAQVIGKGKCLEESDVARLPYLRCIMKEALRKHPPGPFLFPRRPEEDVEVAGYTIPKGAQVLVSIYALGRDPNSWEDPLAFKPERFLDSELDFRGNNFEMLPFGAGRRSCPGLPMAVRMVPLLLGSLINSFDWVLDGGMKPEDLSMEEKVGLTAQLAHPLKIVPIPVKEE.

A helical membrane pass occupies residues 3-23; the sequence is YTTILVGFLIGFVLFKALTRK. Cys-436 provides a ligand contact to heme.

The protein belongs to the cytochrome P450 family. Requires heme as cofactor.

The protein localises to the endoplasmic reticulum membrane. The catalysed reaction is (2E)-geranylhydroquinone + reduced [NADPH--hemoprotein reductase] + O2 = (2Z)-3''-hydroxygeranylhydroquinone + oxidized [NADPH--hemoprotein reductase] + H2O + H(+). Hydroxylase involved in the biosynthesis pathway of the red naphthoquinone pigment shikonin. Catalyzes the key step C-3''-hydroxylation of the prenylated phenolic intermediate geranylhydroquinone to form 3''-hydroxygeranylhydroquinone. This is Geranylhydroquinone 3''-hydroxylase CYP76B74 from Arnebia euchroma (Pink arnebia).